A 329-amino-acid polypeptide reads, in one-letter code: Ubiquitin carboxyl-terminal hydrolase isozyme L5 (329 aa).

Residues 7 to 225 enclose the UCH catalytic domain; that stretch reads EWCLMESDPG…IRFNLMAIVS (219 aa). Lysine 47 bears the N6-succinyllysine mark. Cysteine 88 acts as the Nucleophile in catalysis. At lysine 158 the chain carries N6-acetyllysine. Histidine 164 serves as the catalytic Proton donor. Lysine 289 is subject to N6-succinyllysine. A ULD domain is found at 291–319; sequence NYLPFIMELLKTLAEHQQLIPLVEKAKEK. The segment at 313 to 329 is interaction with ADRM1; it reads VEKAKEKQNAKKAQETK.

Belongs to the peptidase C12 family. In terms of assembly, component of the 19S (PA700) regulatory complex of the 26S proteasome. Interacts with ADRM1 and NFRKB. Component of the INO80 complex; specifically part of a complex module associated with N-terminus of INO80.

The protein resides in the cytoplasm. The protein localises to the nucleus. It carries out the reaction Thiol-dependent hydrolysis of ester, thioester, amide, peptide and isopeptide bonds formed by the C-terminal Gly of ubiquitin (a 76-residue protein attached to proteins as an intracellular targeting signal).. Activated by ADRM1. Inhibited by interaction with NFRKB. Its function is as follows. Protease that specifically cleaves 'Lys-48'-linked polyubiquitin chains. Deubiquitinating enzyme associated with the 19S regulatory subunit of the 26S proteasome. Putative regulatory component of the INO80 complex; however is inactive in the INO80 complex and is activated by a transient interaction of the INO80 complex with the proteasome via ADRM1. The protein is Ubiquitin carboxyl-terminal hydrolase isozyme L5 (UCHL5) of Sus scrofa (Pig).